A 73-amino-acid polypeptide reads, in one-letter code: Translation initiation factor IF-1 (73 aa).

In terms of domain architecture, S1-like spans 1 to 72 (MAKEEAIEKD…SKGRIVYRYK (72 aa)).

Belongs to the IF-1 family. Component of the 30S ribosomal translation pre-initiation complex which assembles on the 30S ribosome in the order IF-2 and IF-3, IF-1 and N-formylmethionyl-tRNA(fMet); mRNA recruitment can occur at any time during PIC assembly.

It is found in the cytoplasm. Its function is as follows. One of the essential components for the initiation of protein synthesis. Stabilizes the binding of IF-2 and IF-3 on the 30S subunit to which N-formylmethionyl-tRNA(fMet) subsequently binds. Helps modulate mRNA selection, yielding the 30S pre-initiation complex (PIC). Upon addition of the 50S ribosomal subunit IF-1, IF-2 and IF-3 are released leaving the mature 70S translation initiation complex. In Salinibacter ruber (strain DSM 13855 / M31), this protein is Translation initiation factor IF-1.